The sequence spans 73 residues: Putative antimicrobial peptide clone 5 (73 aa).

A signal peptide spans 1–22 (MQIKHLITLFFLVLIGADQCSA). A propeptide spanning residues 45-73 (EVSPQIDQYRNFQKREAELEELLDRLPMY) is cleaved from the precursor.

This sequence belongs to the non-disulfide-bridged peptide (NDBP) superfamily. Short antimicrobial peptide (group 4) family. As to expression, expressed by the venom gland.

It localises to the secreted. In terms of biological role, antibacterial peptide. The sequence is that of Putative antimicrobial peptide clone 5 from Tityus costatus (Brazilian scorpion).